An 827-amino-acid polypeptide reads, in one-letter code: Rho GTPase-activating protein 6 (827 aa).

A PH domain is found at T18–A125. The region spanning L172–I371 is the Rho-GAP domain. Disordered regions lie at residues C379–A437 and Y517–N561. The span at I401–D412 shows a compositional bias: basic and acidic residues. Positions I413–D423 are enriched in acidic residues. A compositionally biased stretch (polar residues) spans Y517 to G543. The stretch at G560–H684 forms a coiled coil.

Its function is as follows. Acts as a GTPase activator for the Rac-type GTPase by converting it to an inactive GDP-bound state. The protein is Rho GTPase-activating protein 6 (ROPGAP6) of Arabidopsis thaliana (Mouse-ear cress).